The chain runs to 297 residues: UDP-N-acetylenolpyruvoylglucosamine reductase (297 aa).

An FAD-binding PCMH-type domain is found at 26–191; that stretch reads QTGGPAEYLA…IAATFALKAG (166 aa). Residue R170 is part of the active site. Catalysis depends on S220, which acts as the Proton donor. Residue E290 is part of the active site.

This sequence belongs to the MurB family. Requires FAD as cofactor.

It localises to the cytoplasm. It catalyses the reaction UDP-N-acetyl-alpha-D-muramate + NADP(+) = UDP-N-acetyl-3-O-(1-carboxyvinyl)-alpha-D-glucosamine + NADPH + H(+). It functions in the pathway cell wall biogenesis; peptidoglycan biosynthesis. Cell wall formation. This chain is UDP-N-acetylenolpyruvoylglucosamine reductase, found in Lactobacillus delbrueckii subsp. bulgaricus (strain ATCC 11842 / DSM 20081 / BCRC 10696 / JCM 1002 / NBRC 13953 / NCIMB 11778 / NCTC 12712 / WDCM 00102 / Lb 14).